Here is a 223-residue protein sequence, read N- to C-terminus: Ribose-5-phosphate isomerase A (223 aa).

Residues 32 to 35 (TGST), 85 to 88 (DGAD), and 98 to 101 (KGGG) contribute to the substrate site. Catalysis depends on Glu107, which acts as the Proton acceptor. Lys125 contributes to the substrate binding site.

It belongs to the ribose 5-phosphate isomerase family. Homodimer.

It catalyses the reaction aldehydo-D-ribose 5-phosphate = D-ribulose 5-phosphate. Its pathway is carbohydrate degradation; pentose phosphate pathway; D-ribose 5-phosphate from D-ribulose 5-phosphate (non-oxidative stage): step 1/1. In terms of biological role, catalyzes the reversible conversion of ribose-5-phosphate to ribulose 5-phosphate. The chain is Ribose-5-phosphate isomerase A from Pseudomonas syringae pv. syringae (strain B728a).